Reading from the N-terminus, the 530-residue chain is Bifunctional purine biosynthesis protein PurH (530 aa).

The MGS-like domain occupies 2–150 (TDHPRRVTRA…KNHDDVAVVV (149 aa)).

It belongs to the PurH family.

The catalysed reaction is (6R)-10-formyltetrahydrofolate + 5-amino-1-(5-phospho-beta-D-ribosyl)imidazole-4-carboxamide = 5-formamido-1-(5-phospho-D-ribosyl)imidazole-4-carboxamide + (6S)-5,6,7,8-tetrahydrofolate. The enzyme catalyses IMP + H2O = 5-formamido-1-(5-phospho-D-ribosyl)imidazole-4-carboxamide. The protein operates within purine metabolism; IMP biosynthesis via de novo pathway; 5-formamido-1-(5-phospho-D-ribosyl)imidazole-4-carboxamide from 5-amino-1-(5-phospho-D-ribosyl)imidazole-4-carboxamide (10-formyl THF route): step 1/1. It participates in purine metabolism; IMP biosynthesis via de novo pathway; IMP from 5-formamido-1-(5-phospho-D-ribosyl)imidazole-4-carboxamide: step 1/1. In Bradyrhizobium diazoefficiens (strain JCM 10833 / BCRC 13528 / IAM 13628 / NBRC 14792 / USDA 110), this protein is Bifunctional purine biosynthesis protein PurH.